Reading from the N-terminus, the 380-residue chain is Cytochrome b (380 aa).

4 helical membrane-spanning segments follow: residues 34–54 (FGSL…LLAM), 78–99 (WLIR…FLHI), 114–134 (WNTG…GYVL), and 179–199 (FFAL…THLM). Residues histidine 84 and histidine 98 each contribute to the heme b site. Heme b is bound by residues histidine 183 and histidine 197. Histidine 202 lines the a ubiquinone pocket. A run of 4 helical transmembrane segments spans residues 227–247 (LKDI…ALFS), 289–309 (LGGV…PFLH), 321–341 (LSQT…WVGS), and 348–368 (FIII…ILFP).

The protein belongs to the cytochrome b family. As to quaternary structure, the cytochrome bc1 complex contains 11 subunits: 3 respiratory subunits (MT-CYB, CYC1 and UQCRFS1), 2 core proteins (UQCRC1 and UQCRC2) and 6 low-molecular weight proteins (UQCRH/QCR6, UQCRB/QCR7, UQCRQ/QCR8, UQCR10/QCR9, UQCR11/QCR10 and a cleavage product of UQCRFS1). This cytochrome bc1 complex then forms a dimer. It depends on heme b as a cofactor.

The protein localises to the mitochondrion inner membrane. Component of the ubiquinol-cytochrome c reductase complex (complex III or cytochrome b-c1 complex) that is part of the mitochondrial respiratory chain. The b-c1 complex mediates electron transfer from ubiquinol to cytochrome c. Contributes to the generation of a proton gradient across the mitochondrial membrane that is then used for ATP synthesis. The chain is Cytochrome b (MT-CYB) from Tragopan satyra (Satyr tragopan).